A 432-amino-acid chain; its full sequence is Transcriptional adapter 3-B (432 aa).

Disordered regions lie at residues 90 to 124 and 275 to 315; these read HELGTPIKHSKPKKQKLDGKGSHASGPGPGRPKSR and SPVE…KSLE. Polar residues predominate over residues 293-305; sequence DGASTSPRSQNKP. Residues 335-398 are a coiled coil; sequence ADDSEDEVLA…NEVMDAFRKI (64 aa).

The protein belongs to the NGG1 family.

Its subcellular location is the nucleus. Functions as a component of the PCAF complex. The PCAF complex is capable of efficiently acetylating histones in a nucleosomal context. In Xenopus laevis (African clawed frog), this protein is Transcriptional adapter 3-B (tada3-b).